A 467-amino-acid chain; its full sequence is Iroquois-class homeodomain protein irx-1-A (467 aa).

The segment at residues 126–188 (DPGRPKNATR…NARRRLKKEN (63 aa)) is a DNA-binding region (homeobox; TALE-type). 3 disordered regions span residues 197-306 (KEDD…PPHS), 318-344 (TSPD…QHPA), and 410-467 (SLSS…LPSA). Acidic residues-rich tracts occupy residues 215 to 225 (EDDEEIDLESI) and 233 to 244 (NDGEQSNEEEDE). Positions 245-262 (KLEHLRQGEKESLKKESE) are enriched in basic and acidic residues. The span at 415 to 431 (KTPERTSPKHSDRENVP) shows a compositional bias: basic and acidic residues. Over residues 447–460 (RENTLSQQEGTSRI) the composition is skewed to polar residues.

The protein belongs to the TALE/IRO homeobox family. Expressed early in neural differentiation in the neural plate, and expression continues in the neural tube after neural fold closure. Expressed in the presumptive midbrain territory. Also expressed in the prospective neural crest and the preplacodal field, anterior to the neural plate. Strongly expressed in the profundal placode and weakly expressed in the trigeminal placode. Also expressed in the mesoderm in the Spemann organizer from the start of gastrulation, and subsequently in its derivatives; namely in the notochord as well as in the somites of stage 25 embryos, and the somites and notochord of tailbud embryos. Also expressed in specific and overlapping dynamic patterns with irx2 and irx3 during pronephric kidney development. Renal expression begins in the dorsal region of the pronephric anlage at mid neurula stage and continues to at least tailbud stages where expression is confined to the intermediate tubule segment IT1. Renal expression is maintained at tadpole stages.

Its subcellular location is the nucleus. Its function is as follows. Acts partially redundantly with other irx members in neural patterning. Required for formation of the posterior forebrain, midbrain, hindbrain, and to a lesser extent, spinal cord. Acts early in neural plate development to induce expression of some but not all proneural genes, and specify a neural precursor state. Also up-regulates repressors that prevent neuronal differentiation. Patterns the neuroectoderm in both the anterior/posterior and dorsal/ventral axes. Acts primarily as a transcriptional repressor during neural development, and binds to the bmp4 promoter to repress gene expression and thus mediate down-regulation of bmp4 by wnt signaling. Controls multiple processes through bmp4-repression including neural plate development, neural crest specification and Spemann organizer development. Involved in the specification of the preplacodal field at the anterior border of the neural plate. Regulates the genetic cascade of interactions that are necessary for positioning the isthmus organizer and the formation of the midbrain-hindbrain boundary. Required during at least two stages of pronephros kidney development; during neurula stages, maintains transcription of key renal genes to define the size and identity of the pronephric anlage, probably in part through regulation of bmp-signaling. Subsequently required for proper formation of the intermediate tubule segment of the pronephros. Acts principally as a transcriptional activator during pronephros development. The protein is Iroquois-class homeodomain protein irx-1-A (irx1-a) of Xenopus laevis (African clawed frog).